Reading from the N-terminus, the 356-residue chain is Probable butyrate kinase (356 aa).

It belongs to the acetokinase family.

The protein resides in the cytoplasm. It catalyses the reaction butanoate + ATP = butanoyl phosphate + ADP. This chain is Probable butyrate kinase, found in Coprothermobacter proteolyticus (strain ATCC 35245 / DSM 5265 / OCM 4 / BT).